The sequence spans 360 residues: GTPase Obg (360 aa).

In terms of domain architecture, Obg spans Met1–Ile156. One can recognise an OBG-type G domain in the interval Ala157 to Pro360. GTP contacts are provided by residues Gly163–Ser170, Phe188–Val192, Asp210–Gly213, Asn279–Asp282, and Ser341–Leu343. Positions 170 and 190 each coordinate Mg(2+).

The protein belongs to the TRAFAC class OBG-HflX-like GTPase superfamily. OBG GTPase family. As to quaternary structure, monomer. Mg(2+) serves as cofactor.

The protein localises to the cytoplasm. An essential GTPase which binds GTP, GDP and possibly (p)ppGpp with moderate affinity, with high nucleotide exchange rates and a fairly low GTP hydrolysis rate. Plays a role in control of the cell cycle, stress response, ribosome biogenesis and in those bacteria that undergo differentiation, in morphogenesis control. The chain is GTPase Obg from Helicobacter pylori (strain Shi470).